The following is a 221-amino-acid chain: 5-methylthioribulose-1-phosphate/5-deoxyribulose-1-phosphate aldolase (221 aa).

The Proton donor/acceptor role is filled by Glu75. Co(2+) contacts are provided by Glu75, His94, His96, and His157.

The protein belongs to the aldolase class II family. Co(2+) is required as a cofactor.

It catalyses the reaction 5-(methylsulfanyl)-D-ribulose 1-phosphate = 2-(methylsulfanyl)acetaldehyde + dihydroxyacetone phosphate. It carries out the reaction 5-deoxy-D-ribulose 1-phosphate = dihydroxyacetone phosphate + acetaldehyde. The protein operates within amino-acid biosynthesis; L-methionine biosynthesis via salvage pathway. In terms of biological role, uses 5-methylthioribulose-1-phosphate to yield 2-(methylthio)acetaldehyde and dihydroxyacetone phosphate. Can also use 5-deoxyribulose 1-phosphate to yield acetaldehyde and dihydroxyacetone phosphate. Part of a bifunctional DHAP-shunt salvage pathway for SAM by-products. This Rhodospirillum rubrum (strain ATCC 11170 / ATH 1.1.1 / DSM 467 / LMG 4362 / NCIMB 8255 / S1) protein is 5-methylthioribulose-1-phosphate/5-deoxyribulose-1-phosphate aldolase.